A 105-amino-acid chain; its full sequence is Protein U4 (105 aa).

A helical membrane pass occupies residues F5–V25.

Belongs to the nanovirus U4 protein family.

The protein resides in the membrane. This Faba bean necrotic yellows virus (isolate Egyptian EV1-93) (FBNYV) protein is Protein U4 (DNA-U4).